A 294-amino-acid chain; its full sequence is uncharacterized protein (294 aa).

This is an uncharacterized protein from Methanocaldococcus jannaschii (strain ATCC 43067 / DSM 2661 / JAL-1 / JCM 10045 / NBRC 100440) (Methanococcus jannaschii).